A 119-amino-acid polypeptide reads, in one-letter code: Large ribosomal subunit protein bL20 (119 aa).

This sequence belongs to the bacterial ribosomal protein bL20 family.

Its function is as follows. Binds directly to 23S ribosomal RNA and is necessary for the in vitro assembly process of the 50S ribosomal subunit. It is not involved in the protein synthesizing functions of that subunit. The protein is Large ribosomal subunit protein bL20 of Streptococcus agalactiae serotype Ia (strain ATCC 27591 / A909 / CDC SS700).